We begin with the raw amino-acid sequence, 116 residues long: Large ribosomal subunit protein uL23 (116 aa).

The protein belongs to the universal ribosomal protein uL23 family. Part of the 50S ribosomal subunit. Contacts protein L29, and trigger factor when it is bound to the ribosome.

In terms of biological role, one of the early assembly proteins it binds 23S rRNA. One of the proteins that surrounds the polypeptide exit tunnel on the outside of the ribosome. Forms the main docking site for trigger factor binding to the ribosome. This Psychrobacter arcticus (strain DSM 17307 / VKM B-2377 / 273-4) protein is Large ribosomal subunit protein uL23.